Here is a 273-residue protein sequence, read N- to C-terminus: Putative pyruvate, phosphate dikinase regulatory protein (273 aa).

G149–T156 lines the ADP pocket.

It belongs to the pyruvate, phosphate/water dikinase regulatory protein family. PDRP subfamily.

The enzyme catalyses N(tele)-phospho-L-histidyl/L-threonyl-[pyruvate, phosphate dikinase] + ADP = N(tele)-phospho-L-histidyl/O-phospho-L-threonyl-[pyruvate, phosphate dikinase] + AMP + H(+). The catalysed reaction is N(tele)-phospho-L-histidyl/O-phospho-L-threonyl-[pyruvate, phosphate dikinase] + phosphate + H(+) = N(tele)-phospho-L-histidyl/L-threonyl-[pyruvate, phosphate dikinase] + diphosphate. Bifunctional serine/threonine kinase and phosphorylase involved in the regulation of the pyruvate, phosphate dikinase (PPDK) by catalyzing its phosphorylation/dephosphorylation. This is Putative pyruvate, phosphate dikinase regulatory protein from Rickettsia canadensis (strain McKiel).